The sequence spans 98 residues: Probable sodium channel toxin Ts27 (98 aa).

An N-terminal signal peptide occupies residues 1–22; the sequence is MYNMVSLFIVAVLLLTYANVEG. Cystine bridges form between Cys-36–Cys-88, Cys-40–Cys-63, Cys-49–Cys-68, and Cys-53–Cys-70.

The protein belongs to the long (4 C-C) scorpion toxin superfamily. Sodium channel inhibitor family. In terms of tissue distribution, expressed by the venom gland.

It is found in the secreted. In terms of biological role, probable sodium channel toxin. The sequence is that of Probable sodium channel toxin Ts27 from Tityus serrulatus (Brazilian scorpion).